A 636-amino-acid chain; its full sequence is Tumor protein p73 (636 aa).

Residues 1-46 form a transactivation region; the sequence is MAQSTATSPDGGTTFEHLWSSLEPDSTYFDLPQSSRGNNEVVGGTD. Phosphothreonine; by PLK1 is present on Thr-27. Tyr-28 is modified (phosphotyrosine; by SRC and HCK). The segment at 78 to 104 is disordered; the sequence is RAASASPYTPEHAASVPTHSPYAQPSS. Positions 94-104 are enriched in polar residues; the sequence is PTHSPYAQPSS. Tyr-99 bears the Phosphotyrosine; by ABL1 mark. The segment at 131–310 is DNA-binding; it reads FQQSSTAKSA…DRKADEDHYR (180 aa). Zn(2+)-binding residues include Cys-194, His-197, Cys-258, and Cys-262. A disordered region spans residues 314-345; it reads ALNESSAKNGAASKRAFKQSPPAVPALGAGVK. The interaction with HIPK2 stretch occupies residues 345 to 380; it reads KKRRHGDEDTYYLQVRGRENFEILMKLKESLELMEL. The interval 345 to 386 is oligomerization; the sequence is KKRRHGDEDTYYLQVRGRENFEILMKLKESLELMELVPQPLV. The short motif at 483–487 is the PPxY motif element; sequence PPPPY. The 67-residue stretch at 485–551 folds into the SAM domain; that stretch reads PPYHADPSLV…WRGLQDLKQG (67 aa). Residue Lys-627 forms a Glycyl lysine isopeptide (Lys-Gly) (interchain with G-Cter in SUMO); in isoform Alpha linkage. Residue Lys-627 forms a Glycyl lysine isopeptide (Lys-Gly) (interchain with G-Cter in SUMO2) linkage.

This sequence belongs to the p53 family. As to quaternary structure, found in a complex with p53/TP53 and CABLES1. The C-terminal oligomerization domain binds to the ABL1 tyrosine kinase SH3 domain. Interacts with HECW2. Isoform Beta interacts homotypically and with p53/TP53, whereas isoform Alpha does not. Isoform Gamma interacts homotypically and with all p73 isoforms. Isoform Delta interacts with isoform Gamma, isoform Alpha, and homotypically. Isoforms Alpha and Beta interact with HIPK2. Isoform Alpha interacts with RANBP9. Isoform Beta interacts with WWOX. Interacts (via SAM domain) with FBXO45 (via B30.2/SPRY domain). Interacts with YAP1 (phosphorylated form). Interacts with HCK (via SH3 domain); this inhibits TP73 activity and degradation. Interacts (via SAM domain) with NQO1; this interaction is NADH-dependent, stabilizes TP73 in response to oxidative stress and protects it from ubiquitin-independent degradation by the 20S proteasome. (Microbial infection) Interacts with Epstein-Barr virus protein EBNA6; this interaction inhibits TP73-mediated apoptotic pathway. Requires Zn(2+) as cofactor. Isoform alpha (but not isoform beta) is sumoylated on Lys-627, which potentiates proteasomal degradation but does not affect transcriptional activity. Phosphorylation by PLK1 and PLK3 inhibits the transcription regulator activity and pro-apoptotic function. Post-translationally, higher levels of phosphorylation seen in the brain from patients with Huntington disease. In terms of processing, polyubiquitinated by RCHY1/PIRH2; leading to its degradation by the proteasome. In terms of tissue distribution, expressed in striatal neurons of patients with Huntington disease (at protein level). Brain, kidney, placenta, colon, heart, liver, spleen, skeletal muscle, prostate, thymus and pancreas. Highly expressed in fetal tissue. Expressed in the respiratory epithelium.

The protein localises to the nucleus. The protein resides in the cytoplasm. Participates in the apoptotic response to DNA damage. Isoforms containing the transactivation domain are pro-apoptotic, isoforms lacking the domain are anti-apoptotic and block the function of p53 and transactivating p73 isoforms. May be a tumor suppressor protein. Is an activator of FOXJ1 expression. It is an essential factor for the positive regulation of lung ciliated cell differentiation. This chain is Tumor protein p73 (TP73), found in Homo sapiens (Human).